Reading from the N-terminus, the 70-residue chain is MQKDIQPEYHQDAVVKCACGNTFTTGSTKKELKVDICSKCHPFFTGQQKIVDVGGRVEKFRKKYNLSADK.

The Zn(2+) site is built by Cys17, Cys19, Cys37, and Cys40.

This sequence belongs to the bacterial ribosomal protein bL31 family. Type A subfamily. In terms of assembly, part of the 50S ribosomal subunit. Requires Zn(2+) as cofactor.

Functionally, binds the 23S rRNA. In Clostridium acetobutylicum (strain ATCC 824 / DSM 792 / JCM 1419 / IAM 19013 / LMG 5710 / NBRC 13948 / NRRL B-527 / VKM B-1787 / 2291 / W), this protein is Large ribosomal subunit protein bL31.